Reading from the N-terminus, the 424-residue chain is Fasciclin-like arabinogalactan protein 1 (424 aa).

The N-terminal stretch at 1–24 is a signal peptide; it reads MAKKMSSLIIIFNILLLLTTQTHA. 2 FAS1 domains span residues 25–170 and 184–323; these read HNVT…SRVL and EMNL…DKVL. N-linked (GlcNAc...) asparagine glycans are attached at residues N26, N128, N160, N186, and N240. Residues 338 to 393 are disordered; the sequence is APAPAPEDGDVADSPKAAKGKAKGKKKKAAPSPDNDPFGDSDSPAEGPDGEADDAT. A compositionally biased stretch (basic residues) spans 355-366; it reads AKGKAKGKKKKA. D396 carries the GPI-anchor amidated aspartate lipid modification. Residues 397–424 constitute a propeptide, removed in mature form; it reads AGAVRIIGGAKAGLVVSLLCLFASSWLL.

This sequence belongs to the fasciclin-like AGP family. In terms of tissue distribution, preferentially expressed in flowers.

It is found in the secreted. It localises to the extracellular space. Its subcellular location is the apoplast. The protein resides in the cell membrane. Functionally, may be a cell surface adhesion protein. This is Fasciclin-like arabinogalactan protein 1 (FLA1) from Arabidopsis thaliana (Mouse-ear cress).